The sequence spans 32 residues: CSNLSTCVLGKLSQDLHKLQTFPRTNTGAGVP.

An intrachain disulfide couples C1 to C7. P32 bears the Proline amide mark.

Belongs to the calcitonin family.

Its subcellular location is the secreted. Causes a rapid but short-lived drop in the level of calcium and phosphate in blood by promoting the incorporation of those ions in the bones. This chain is Calcitonin-2, found in Oncorhynchus gorbuscha (Pink salmon).